Consider the following 390-residue polypeptide: L-seryl-tRNA(Sec) selenium transferase (390 aa).

Position 225 is an N6-(pyridoxal phosphate)lysine (Lys225).

It belongs to the SelA family. Requires pyridoxal 5'-phosphate as cofactor.

The protein localises to the cytoplasm. The catalysed reaction is L-seryl-tRNA(Sec) + selenophosphate + H(+) = L-selenocysteinyl-tRNA(Sec) + phosphate. It functions in the pathway aminoacyl-tRNA biosynthesis; selenocysteinyl-tRNA(Sec) biosynthesis; selenocysteinyl-tRNA(Sec) from L-seryl-tRNA(Sec) (bacterial route): step 1/1. Its function is as follows. Converts seryl-tRNA(Sec) to selenocysteinyl-tRNA(Sec) required for selenoprotein biosynthesis. This is L-seryl-tRNA(Sec) selenium transferase from Helicobacter pylori (strain J99 / ATCC 700824) (Campylobacter pylori J99).